A 294-amino-acid chain; its full sequence is ATP phosphoribosyltransferase (294 aa).

Belongs to the ATP phosphoribosyltransferase family. Long subfamily. The cofactor is Mg(2+).

It localises to the cytoplasm. The enzyme catalyses 1-(5-phospho-beta-D-ribosyl)-ATP + diphosphate = 5-phospho-alpha-D-ribose 1-diphosphate + ATP. The protein operates within amino-acid biosynthesis; L-histidine biosynthesis; L-histidine from 5-phospho-alpha-D-ribose 1-diphosphate: step 1/9. Its activity is regulated as follows. Feedback inhibited by histidine. In terms of biological role, catalyzes the condensation of ATP and 5-phosphoribose 1-diphosphate to form N'-(5'-phosphoribosyl)-ATP (PR-ATP). Has a crucial role in the pathway because the rate of histidine biosynthesis seems to be controlled primarily by regulation of HisG enzymatic activity. This chain is ATP phosphoribosyltransferase, found in Prosthecochloris aestuarii (strain DSM 271 / SK 413).